The chain runs to 534 residues: Probable glycine dehydrogenase (decarboxylating) subunit 2 (534 aa).

Lys-273 is modified (N6-(pyridoxal phosphate)lysine).

This sequence belongs to the GcvP family. C-terminal subunit subfamily. As to quaternary structure, the glycine cleavage system is composed of four proteins: P, T, L and H. In this organism, the P 'protein' is a heterodimer of two subunits. The cofactor is pyridoxal 5'-phosphate.

The enzyme catalyses N(6)-[(R)-lipoyl]-L-lysyl-[glycine-cleavage complex H protein] + glycine + H(+) = N(6)-[(R)-S(8)-aminomethyldihydrolipoyl]-L-lysyl-[glycine-cleavage complex H protein] + CO2. The glycine cleavage system catalyzes the degradation of glycine. The P protein binds the alpha-amino group of glycine through its pyridoxal phosphate cofactor; CO(2) is released and the remaining methylamine moiety is then transferred to the lipoamide cofactor of the H protein. The chain is Probable glycine dehydrogenase (decarboxylating) subunit 2 from Bacillus cereus (strain ATCC 14579 / DSM 31 / CCUG 7414 / JCM 2152 / NBRC 15305 / NCIMB 9373 / NCTC 2599 / NRRL B-3711).